A 928-amino-acid chain; its full sequence is Protein ARABIDILLO 2 (928 aa).

Positions 3–8 (RRVRQR) match the Nuclear localization signal motif. One can recognise an F-box domain in the interval 37-83 (YVNWTSLPYDTVFHLFTRLNYRDRASLASTCRTWRSLGASSFLWSSL). ARM repeat units follow at residues 147-186 (AARH…KLRV), 237-278 (TSNI…KSSQ), 303-341 (KGKV…DLIR), 370-409 (SQGL…TFIV), 419-458 (CGRA…NLSV), 460-499 (AKVA…NLSV), 501-543 (EEHK…NLAA), 545-585 (DKCS…NLAA), 591-630 (GNNA…NLAF), 632-674 (DKNR…GLSV), 676-715 (EANS…NLSF), 717-757 (PGNA…YMFD), and 824-864 (IPEA…QFTI).

This sequence belongs to the beta-catenin family. Expressed ubiquitously.

Its subcellular location is the nucleus. Functionally, promotes lateral root initiation and development, independently of auxin (IAA) and abscisis acid (ABA). The polypeptide is Protein ARABIDILLO 2 (Arabidopsis thaliana (Mouse-ear cress)).